The following is a 230-amino-acid chain: Cysteine S-methyltransferase OspZ (230 aa).

Positions 49–52 are interaction with host proteins TAB2, TAB3 and ZRANB3; that stretch reads GITR. Residues Ala-92, Ser-98, Arg-107, Gln-111, Tyr-204, and Glu-208 each coordinate S-adenosyl-L-methionine.

This sequence belongs to the NleE/OspZ family. As to quaternary structure, monomer.

It is found in the secreted. It localises to the host cytoplasm. The protein localises to the host nucleus. It catalyses the reaction L-cysteinyl-[protein] + S-adenosyl-L-methionine = S-methyl-L-cysteinyl-[protein] + S-adenosyl-L-homocysteine + H(+). Its function is as follows. Cysteine methyltransferase effector that inhibits host cell NF-kappa-B activation by preventing nuclear translocation of host protein RELA/p65. Acts by mediating cysteine methylation of host proteins TAB2 and TAB3: methylation of a conserved cysteine residue of the RanBP2-type zinc finger (NZF) of TAB2 and TAB3 disrupts zinc-binding, thereby inactivating the ubiquitin chain-binding activity of TAB2 and TAB3, leading to NF-kappa-B inactivation. Also mediates cysteine methylation of host protein ZRANB3, inactivating its ability to bind ubiquitin chains. This chain is Cysteine S-methyltransferase OspZ, found in Shigella boydii.